A 335-amino-acid polypeptide reads, in one-letter code: Oligopeptide transport ATP-binding protein OppD (335 aa).

The ABC transporter domain occupies Leu18–Leu267. Gly54–Ser61 contacts ATP.

Belongs to the ABC transporter superfamily. In terms of assembly, the complex is composed of two ATP-binding proteins (OppD and OppF), two transmembrane proteins (OppB and OppC) and a solute-binding protein (OppA).

The protein localises to the cell inner membrane. It carries out the reaction a [peptide](out) + ATP + H2O = a [peptide](in) + ADP + phosphate + H(+). The catalysed reaction is L-alanyl-gamma-D-glutamyl-meso-2,6-diaminopimelate(out) + ATP + H2O = L-alanyl-gamma-D-glutamyl-meso-2,6-diaminopimelate(in) + ADP + phosphate + H(+). Part of the ABC transporter complex OppABCDF involved in the uptake of oligopeptides, including the cell wall murein tripeptide L-alanyl-gamma-D-glutamyl-meso-diaminopimelate. Responsible for energy coupling to the transport system. Plays an important nutritional role and is involved in the recycling of cell wall peptides. Binds ATP. The chain is Oligopeptide transport ATP-binding protein OppD from Salmonella typhimurium (strain LT2 / SGSC1412 / ATCC 700720).